The chain runs to 227 residues: Flagellar L-ring protein (227 aa).

The first 15 residues, 1-15 (MRTWAVLPILLMLVG), serve as a signal peptide directing secretion. The N-palmitoyl cysteine moiety is linked to residue C16. Residue C16 is the site of S-diacylglycerol cysteine attachment.

It belongs to the FlgH family. In terms of assembly, the basal body constitutes a major portion of the flagellar organelle and consists of four rings (L,P,S, and M) mounted on a central rod.

Its subcellular location is the cell outer membrane. The protein resides in the bacterial flagellum basal body. Its function is as follows. Assembles around the rod to form the L-ring and probably protects the motor/basal body from shearing forces during rotation. The sequence is that of Flagellar L-ring protein from Syntrophotalea carbinolica (strain DSM 2380 / NBRC 103641 / GraBd1) (Pelobacter carbinolicus).